The following is a 181-amino-acid chain: Crossover junction endodeoxyribonuclease RuvC (181 aa).

Active-site residues include Asp8, Glu67, and Asp139. Residues Asp8, Glu67, and Asp139 each coordinate Mg(2+).

It belongs to the RuvC family. As to quaternary structure, homodimer which binds Holliday junction (HJ) DNA. The HJ becomes 2-fold symmetrical on binding to RuvC with unstacked arms; it has a different conformation from HJ DNA in complex with RuvA. In the full resolvosome a probable DNA-RuvA(4)-RuvB(12)-RuvC(2) complex forms which resolves the HJ. Requires Mg(2+) as cofactor.

The protein resides in the cytoplasm. It catalyses the reaction Endonucleolytic cleavage at a junction such as a reciprocal single-stranded crossover between two homologous DNA duplexes (Holliday junction).. Its function is as follows. The RuvA-RuvB-RuvC complex processes Holliday junction (HJ) DNA during genetic recombination and DNA repair. Endonuclease that resolves HJ intermediates. Cleaves cruciform DNA by making single-stranded nicks across the HJ at symmetrical positions within the homologous arms, yielding a 5'-phosphate and a 3'-hydroxyl group; requires a central core of homology in the junction. The consensus cleavage sequence is 5'-(A/T)TT(C/G)-3'. Cleavage occurs on the 3'-side of the TT dinucleotide at the point of strand exchange. HJ branch migration catalyzed by RuvA-RuvB allows RuvC to scan DNA until it finds its consensus sequence, where it cleaves and resolves the cruciform DNA. The chain is Crossover junction endodeoxyribonuclease RuvC from Acinetobacter baylyi (strain ATCC 33305 / BD413 / ADP1).